A 37-amino-acid polypeptide reads, in one-letter code: Large ribosomal subunit protein bL36 (37 aa).

Belongs to the bacterial ribosomal protein bL36 family.

The polypeptide is Large ribosomal subunit protein bL36 (Halothermothrix orenii (strain H 168 / OCM 544 / DSM 9562)).